A 359-amino-acid chain; its full sequence is 4-hydroxy-3-methylbut-2-en-1-yl diphosphate synthase (flavodoxin) (359 aa).

[4Fe-4S] cluster contacts are provided by cysteine 264, cysteine 267, cysteine 299, and glutamate 306.

Belongs to the IspG family. It depends on [4Fe-4S] cluster as a cofactor.

It catalyses the reaction (2E)-4-hydroxy-3-methylbut-2-enyl diphosphate + oxidized [flavodoxin] + H2O + 2 H(+) = 2-C-methyl-D-erythritol 2,4-cyclic diphosphate + reduced [flavodoxin]. It functions in the pathway isoprenoid biosynthesis; isopentenyl diphosphate biosynthesis via DXP pathway; isopentenyl diphosphate from 1-deoxy-D-xylulose 5-phosphate: step 5/6. Functionally, converts 2C-methyl-D-erythritol 2,4-cyclodiphosphate (ME-2,4cPP) into 1-hydroxy-2-methyl-2-(E)-butenyl 4-diphosphate. In Helicobacter pylori (strain ATCC 700392 / 26695) (Campylobacter pylori), this protein is 4-hydroxy-3-methylbut-2-en-1-yl diphosphate synthase (flavodoxin).